We begin with the raw amino-acid sequence, 422 residues long: 3-phosphoshikimate 1-carboxyvinyltransferase (422 aa).

3-phosphoshikimate-binding residues include Lys-20, Ser-21, and Arg-25. Lys-20 serves as a coordination point for phosphoenolpyruvate. Residues Gly-90 and Arg-118 each coordinate phosphoenolpyruvate. Ser-163, Ser-164, Gln-165, Ser-191, Asp-306, and Lys-333 together coordinate 3-phosphoshikimate. Phosphoenolpyruvate is bound at residue Gln-165. Asp-306 (proton acceptor) is an active-site residue. Arg-337 and Arg-378 together coordinate phosphoenolpyruvate.

It belongs to the EPSP synthase family. Monomer.

It is found in the cytoplasm. It carries out the reaction 3-phosphoshikimate + phosphoenolpyruvate = 5-O-(1-carboxyvinyl)-3-phosphoshikimate + phosphate. The protein operates within metabolic intermediate biosynthesis; chorismate biosynthesis. Its function is as follows. Catalyzes the transfer of the enolpyruvyl moiety of phosphoenolpyruvate (PEP) to the 5-hydroxyl of shikimate-3-phosphate (S3P) to produce enolpyruvyl shikimate-3-phosphate and inorganic phosphate. The protein is 3-phosphoshikimate 1-carboxyvinyltransferase of Methanocella arvoryzae (strain DSM 22066 / NBRC 105507 / MRE50).